A 441-amino-acid chain; its full sequence is Putative cytochrome P450 138 (441 aa).

Cys388 contributes to the heme binding site.

It belongs to the cytochrome P450 family. Requires heme as cofactor.

This Mycobacterium bovis (strain ATCC BAA-935 / AF2122/97) protein is Putative cytochrome P450 138 (cyp138).